Here is a 302-residue protein sequence, read N- to C-terminus: Ornithine carbamoyltransferase (302 aa).

Residues 47–50 (STRT), glutamine 74, arginine 98, and 125–128 (HPCQ) contribute to the carbamoyl phosphate site. L-ornithine-binding positions include asparagine 156, aspartate 220, and 224-225 (SM). Residues 260-261 (CL) and arginine 288 each bind carbamoyl phosphate.

The protein belongs to the aspartate/ornithine carbamoyltransferase superfamily. OTCase family.

It localises to the cytoplasm. It carries out the reaction carbamoyl phosphate + L-ornithine = L-citrulline + phosphate + H(+). It functions in the pathway amino-acid biosynthesis; L-arginine biosynthesis; L-arginine from L-ornithine and carbamoyl phosphate: step 1/3. Its function is as follows. Reversibly catalyzes the transfer of the carbamoyl group from carbamoyl phosphate (CP) to the N(epsilon) atom of ornithine (ORN) to produce L-citrulline. The polypeptide is Ornithine carbamoyltransferase (Methanosphaera stadtmanae (strain ATCC 43021 / DSM 3091 / JCM 11832 / MCB-3)).